A 636-amino-acid chain; its full sequence is Translation factor GUF1 homolog, chloroplastic (636 aa).

Positions 31–212 (NLARNFSIIA…AIVTKIPPPQ (182 aa)) constitute a tr-type G domain. GTP-binding positions include 40 to 47 (AHIDHGKS), 105 to 109 (DTPGH), and 159 to 162 (NKID).

This sequence belongs to the TRAFAC class translation factor GTPase superfamily. Classic translation factor GTPase family. LepA subfamily.

Its subcellular location is the plastid. It localises to the chloroplast. The enzyme catalyses GTP + H2O = GDP + phosphate + H(+). Functionally, promotes chloroplast protein synthesis. May act as a fidelity factor of the translation reaction, by catalyzing a one-codon backward translocation of tRNAs on improperly translocated ribosomes. This is Translation factor GUF1 homolog, chloroplastic from Oryza sativa subsp. indica (Rice).